A 273-amino-acid polypeptide reads, in one-letter code: HTH-type transcriptional activator RhaS (273 aa).

One can recognise an HTH araC/xylS-type domain in the interval 174 to 272; it reads YQLLDWLQNN…SQSPRDLRSQ (99 aa). 2 consecutive DNA-binding regions (H-T-H motif) follow at residues 191–212 and 239–262; these read PELA…KNKT and VTDI…KREF.

In terms of assembly, binds DNA as a dimer.

It is found in the cytoplasm. Functionally, activates expression of the rhaBAD and rhaT operons. The protein is HTH-type transcriptional activator RhaS of Yersinia pestis bv. Antiqua (strain Antiqua).